Reading from the N-terminus, the 360-residue chain is MTSILREQRRDNVWDRFCEWVTSTDNRIYVGWFGVLMIPTLLTATICFIVAFIAAPPVDIDGIREPVAGSLMYGNNIISGAVVPSSNAIGLHFYPIWEAASLDEWLYNGGPYQLVVFHFLLGISCYMGRQWELSYRLGMRPWICVAYSAPLSAAFAVFLIYPIGQGSFSDGMPLGISGTFNFMFVFQAEHNILMHPFHMLGVAGVFGGSLFSAMHGSLVTSSLVRETTETESQNYGYKFGQEEETYNIVAAHGYFGRLIFQYASFNNSRSLHFFLGAWPVVGIWFTSMGISTMAFNLNGFNFNQSVLDSQGKVINTWADVLNRANLGMEVMHERNAHNFPLDLAAGEATPVALTAPSIHG.

3 helical membrane passes run 29–46 (YVGW…TATI), 118–133 (HFLL…QWEL), and 142–156 (WICV…AAFA). Histidine 118 provides a ligand contact to chlorophyll a. Tyrosine 126 serves as a coordination point for pheophytin a. Residues aspartate 170 and glutamate 189 each coordinate [CaMn4O5] cluster. Residues 197-218 (FHMLGVAGVFGGSLFSAMHGSL) form a helical membrane-spanning segment. Chlorophyll a is bound at residue histidine 198. A quinone is bound by residues histidine 215 and 264–265 (SF). Histidine 215 contacts Fe cation. Histidine 272 lines the Fe cation pocket. A helical transmembrane segment spans residues 274-288 (FLGAWPVVGIWFTSM). Histidine 332, glutamate 333, aspartate 342, and alanine 344 together coordinate [CaMn4O5] cluster. Positions 345–360 (AGEATPVALTAPSIHG) are excised as a propeptide.

This sequence belongs to the reaction center PufL/M/PsbA/D family. As to quaternary structure, PSII is composed of 1 copy each of membrane proteins PsbA, PsbB, PsbC, PsbD, PsbE, PsbF, PsbH, PsbI, PsbJ, PsbK, PsbL, PsbM, PsbT, PsbX, PsbY, PsbZ, Psb30/Ycf12, peripheral proteins PsbO, CyanoQ (PsbQ), PsbU, PsbV and a large number of cofactors. It forms dimeric complexes. The D1/D2 heterodimer binds P680, chlorophylls that are the primary electron donor of PSII, and subsequent electron acceptors. It shares a non-heme iron and each subunit binds pheophytin, quinone, additional chlorophylls, carotenoids and lipids. D1 provides most of the ligands for the Mn4-Ca-O5 cluster of the oxygen-evolving complex (OEC). There is also a Cl(-1) ion associated with D1 and D2, which is required for oxygen evolution. The PSII complex binds additional chlorophylls, carotenoids and specific lipids. serves as cofactor. Post-translationally, tyr-161 forms a radical intermediate that is referred to as redox-active TyrZ, YZ or Y-Z. C-terminally processed by CtpA; processing is essential to allow assembly of the oxygen-evolving complex and thus photosynthetic growth.

Its subcellular location is the cellular thylakoid membrane. The catalysed reaction is 2 a plastoquinone + 4 hnu + 2 H2O = 2 a plastoquinol + O2. Functionally, photosystem II (PSII) is a light-driven water:plastoquinone oxidoreductase that uses light energy to abstract electrons from H(2)O, generating O(2) and a proton gradient subsequently used for ATP formation. It consists of a core antenna complex that captures photons, and an electron transfer chain that converts photonic excitation into a charge separation. The D1/D2 (PsbA/PsbD) reaction center heterodimer binds P680, the primary electron donor of PSII as well as several subsequent electron acceptors. The protein is Photosystem II protein D1 3 of Synechococcus sp. (strain ATCC 27144 / PCC 6301 / SAUG 1402/1) (Anacystis nidulans).